A 538-amino-acid chain; its full sequence is Calcium-dependent protein kinase 8 (538 aa).

Residues 1–26 (MGNCCGTPATAEEGGKRRRRGKQKKA) form a disordered region. Gly-2 carries N-myristoyl glycine lipidation. Basic residues predominate over residues 16–25 (KRRRRGKQKK). In terms of domain architecture, Protein kinase spans 64 to 322 (YELGGELGRG…AEQVLEHPWL (259 aa)). ATP is bound by residues 70–78 (LGRGEFGIT) and Lys-93. Asp-188 (proton acceptor) is an active-site residue. The interval 328–358 (MPDIPLGDAVRARLQQFAAMNKLKKKALKVI) is autoinhibitory domain. 4 EF-hand domains span residues 365 to 400 (EEAA…LGNQ), 401 to 436 (MPDS…VRKI), 437 to 472 (GNDE…EIDG), and 473 to 508 (NDED…GTDW). 19 residues coordinate Ca(2+): Asp-378, Ser-380, Asn-382, Gln-384, Asp-389, Asp-414, Asp-416, Asn-418, Glu-425, Asp-450, Asn-452, Ser-454, Tyr-456, Glu-461, Asp-486, Asp-488, Asp-490, Lys-492, and Glu-497.

Belongs to the protein kinase superfamily. Ser/Thr protein kinase family. CDPK subfamily.

It is found in the membrane. It carries out the reaction L-seryl-[protein] + ATP = O-phospho-L-seryl-[protein] + ADP + H(+). The enzyme catalyses L-threonyl-[protein] + ATP = O-phospho-L-threonyl-[protein] + ADP + H(+). Its activity is regulated as follows. Activated by calcium. Autophosphorylation may play an important role in the regulation of the kinase activity. Its function is as follows. May play a role in signal transduction pathways that involve calcium as a second messenger. The chain is Calcium-dependent protein kinase 8 from Oryza sativa subsp. japonica (Rice).